Reading from the N-terminus, the 108-residue chain is Thioredoxin Asp f 28 (108 aa).

Positions 1 to 108 (MSHGKVIAVD…LEEMIKSISA (108 aa)) constitute a Thioredoxin domain. Catalysis depends on nucleophile residues Cys33 and Cys36. Cys33 and Cys36 are joined by a disulfide.

Belongs to the thioredoxin family.

In terms of biological role, participates in various redox reactions through the reversible oxidation of its active center dithiol to a disulfide and catalyzes dithiol-disulfide exchange reactions. The sequence is that of Thioredoxin Asp f 28 from Aspergillus fumigatus (Neosartorya fumigata).